Reading from the N-terminus, the 1390-residue chain is DNA-directed RNA polymerase subunit beta' (1390 aa).

Zn(2+) contacts are provided by Cys73, Cys75, Cys88, and Cys91. 3 residues coordinate Mg(2+): Asp464, Asp466, and Asp468. Positions 810, 884, 891, and 894 each coordinate Zn(2+). Residues Glu1365 to Thr1390 are disordered.

The protein belongs to the RNA polymerase beta' chain family. In terms of assembly, the RNAP catalytic core consists of 2 alpha, 1 beta, 1 beta' and 1 omega subunit. When a sigma factor is associated with the core the holoenzyme is formed, which can initiate transcription. Mg(2+) serves as cofactor. The cofactor is Zn(2+).

The catalysed reaction is RNA(n) + a ribonucleoside 5'-triphosphate = RNA(n+1) + diphosphate. Its function is as follows. DNA-dependent RNA polymerase catalyzes the transcription of DNA into RNA using the four ribonucleoside triphosphates as substrates. The sequence is that of DNA-directed RNA polymerase subunit beta' from Methylacidiphilum infernorum (isolate V4) (Methylokorus infernorum (strain V4)).